A 216-amino-acid polypeptide reads, in one-letter code: NKG2-D type II integral membrane protein (216 aa).

Topologically, residues 1–51 (MGWIRGRRSRHSWEMSEFHNYNLDLKKSDFSTRWQKQRCPVVKSKCRENAS) are cytoplasmic. The chain crosses the membrane as a helical; Signal-anchor for type II membrane protein span at residues 52 to 72 (PFFFCCFIAVAMGIRFIIMVT). Over 73–216 (IWSAVFLNSL…NTYICMQRTV (144 aa)) the chain is Extracellular. 4 cysteine pairs are disulfide-bonded: Cys96–Cys105, Cys99–Cys110, Cys127–Cys211, and Cys189–Cys203. Residues 98-213 (PCPKNWICYK…STPNTYICMQ (116 aa)) form the C-type lectin domain. Asn131, Asn163, and Asn202 each carry an N-linked (GlcNAc...) asparagine glycan.

In terms of assembly, homodimer; disulfide-linked. Heterohexamer composed of two subunits of KLRK1 and four subunits of HCST/DAP10. Interacts (via transmembrane domain) with HCST/DAP10 (via transmembrane domain); the interaction is required for KLRK1 NK cell surface and induces NK cell-mediated cytotoxicity. Does not interact with TYROBP. Interacts with CEACAM1; recruits PTPN6 that dephosphorylates VAV1. Expressed in natural killer (NK) cells, CD8(+) alpha-beta and gamma-delta T-cells. Expressed on essentially all CD56+CD3- NK cells from freshly isolated PBMC. Expressed in interferon-producing killer dendritic cells (IKDCs).

It is found in the cell membrane. Functionally, functions as an activating and costimulatory receptor involved in immunosurveillance upon binding to various cellular stress-inducible ligands displayed at the surface of autologous tumor cells and virus-infected cells. Provides both stimulatory and costimulatory innate immune responses on activated killer (NK) cells, leading to cytotoxic activity. Acts as a costimulatory receptor for T-cell receptor (TCR) in CD8(+) T-cell-mediated adaptive immune responses by amplifying T-cell activation. Stimulates perforin-mediated elimination of ligand-expressing tumor cells. Signaling involves calcium influx, culminating in the expression of TNF-alpha. Participates in NK cell-mediated bone marrow graft rejection. May play a regulatory role in differentiation and survival of NK cells. Binds to ligands belonging to various subfamilies of MHC class I-related glycoproteins including MICA, MICB, RAET1E, RAET1G, RAET1L/ULBP6, ULBP1, ULBP2, ULBP3 (ULBP2&gt;ULBP1&gt;ULBP3) and ULBP4. The protein is NKG2-D type II integral membrane protein (KLRK1) of Homo sapiens (Human).